The sequence spans 344 residues: N-acetyl-gamma-glutamyl-phosphate reductase (344 aa).

The active site involves Cys149.

Belongs to the NAGSA dehydrogenase family. Type 1 subfamily.

Its subcellular location is the cytoplasm. The enzyme catalyses N-acetyl-L-glutamate 5-semialdehyde + phosphate + NADP(+) = N-acetyl-L-glutamyl 5-phosphate + NADPH + H(+). It participates in amino-acid biosynthesis; L-arginine biosynthesis; N(2)-acetyl-L-ornithine from L-glutamate: step 3/4. In terms of biological role, catalyzes the NADPH-dependent reduction of N-acetyl-5-glutamyl phosphate to yield N-acetyl-L-glutamate 5-semialdehyde. This Syntrophobacter fumaroxidans (strain DSM 10017 / MPOB) protein is N-acetyl-gamma-glutamyl-phosphate reductase.